Consider the following 44-residue polypeptide: Photosystem I reaction center subunit IX (44 aa).

A helical transmembrane segment spans residues 7-27 (YLSTVPVLTTLWFGSLAGLLI).

The protein belongs to the PsaJ family.

The protein localises to the plastid. It is found in the chloroplast thylakoid membrane. Functionally, may help in the organization of the PsaE and PsaF subunits. This Dioscorea elephantipes (Elephant's foot yam) protein is Photosystem I reaction center subunit IX.